The chain runs to 311 residues: MLKSFSMDFAFFEGKIVPVEEAKISIMTNSFHYGTAIFEGIRAYWNEEEEQLYILFAKEHYERLLTNARCLFMELNYSAEELVEITKEILRKSEIREDVYIRPIAYFKDLKLTPKLIDYTPEIAIYLYRFGRYLDTSKGIRAKVSSWRRNDDNSIPSRWKVAGAYVNSALAKTEALMSGYDEAILLNSQGYVAEGSGENIFIIKNGKAITPSPNEHILEGITRNAVITLLKKELVVEVEERPIARSELYTADEVFLTGTAAEVTPVVEIDNRKIGNGEIGPITKQLQEFYFNAVRGKIQRYKKWLTPVYDK.

The residue at position 160 (Lys-160) is an N6-(pyridoxal phosphate)lysine.

Belongs to the class-IV pyridoxal-phosphate-dependent aminotransferase family. Pyridoxal 5'-phosphate is required as a cofactor.

The catalysed reaction is L-leucine + 2-oxoglutarate = 4-methyl-2-oxopentanoate + L-glutamate. The enzyme catalyses L-isoleucine + 2-oxoglutarate = (S)-3-methyl-2-oxopentanoate + L-glutamate. It catalyses the reaction L-valine + 2-oxoglutarate = 3-methyl-2-oxobutanoate + L-glutamate. It functions in the pathway amino-acid biosynthesis; L-isoleucine biosynthesis; L-isoleucine from 2-oxobutanoate: step 4/4. Its pathway is amino-acid biosynthesis; L-leucine biosynthesis; L-leucine from 3-methyl-2-oxobutanoate: step 4/4. The protein operates within amino-acid biosynthesis; L-valine biosynthesis; L-valine from pyruvate: step 4/4. Its function is as follows. Acts on leucine, isoleucine and valine. The polypeptide is Probable branched-chain-amino-acid aminotransferase (ilvE) (Aquifex aeolicus (strain VF5)).